The primary structure comprises 219 residues: Peroxiredoxin-5, mitochondrial (219 aa).

The transit peptide at 1 to 57 (MRLGWLRVLGCRPGSVVSRATIVEGASTTAAGTRGCLEGILEWTFGGVRGFRSAAVA) directs the protein to the mitochondrion. The region spanning 61 to 219 (IKVGDAIPSV…SLAPNILSQL (159 aa)) is the Thioredoxin domain. Lys-80 carries the N6-acetyllysine modification. Lys-88 carries the post-translational modification N6-acetyllysine; alternate. Position 88 is an N6-succinyllysine; alternate (Lys-88). Catalysis depends on Cys-105, which acts as the Cysteine sulfenic acid (-SOH) intermediate. Cys-105 is lipidated: S-palmitoyl cysteine. Cysteines 105 and 209 form a disulfide. Lys-121 is subject to N6-succinyllysine. A Phosphoserine modification is found at Ser-187. The short motif at 217–219 (SQL) is the Microbody targeting signal element.

The protein belongs to the peroxiredoxin family. Prx5 subfamily. Monomer. Post-translationally, S-palmitoylated. Palmitoylation occurs on the active site, inhibiting its reactivity; therefore PRDX5 palmitoylation status determines its antioxidant capacity. S-palmitoylated. Depalmitoylated by ABHD10.

It localises to the mitochondrion. Its subcellular location is the cytoplasm. It is found in the peroxisome matrix. The catalysed reaction is a hydroperoxide + [thioredoxin]-dithiol = an alcohol + [thioredoxin]-disulfide + H2O. Functionally, thiol-specific peroxidase that catalyzes the reduction of hydrogen peroxide and organic hydroperoxides to water and alcohols, respectively. Plays a role in cell protection against oxidative stress by detoxifying peroxides and as sensor of hydrogen peroxide-mediated signaling events. The polypeptide is Peroxiredoxin-5, mitochondrial (PRDX5) (Bos taurus (Bovine)).